The sequence spans 485 residues: N-succinylglutamate 5-semialdehyde dehydrogenase (485 aa).

220–225 contacts NAD(+); the sequence is GSANTG. Catalysis depends on residues Glu243 and Cys278.

It belongs to the aldehyde dehydrogenase family. AstD subfamily.

The catalysed reaction is N-succinyl-L-glutamate 5-semialdehyde + NAD(+) + H2O = N-succinyl-L-glutamate + NADH + 2 H(+). The protein operates within amino-acid degradation; L-arginine degradation via AST pathway; L-glutamate and succinate from L-arginine: step 4/5. Its function is as follows. Catalyzes the NAD-dependent reduction of succinylglutamate semialdehyde into succinylglutamate. This Vibrio cholerae serotype O1 (strain ATCC 39541 / Classical Ogawa 395 / O395) protein is N-succinylglutamate 5-semialdehyde dehydrogenase.